The sequence spans 580 residues: Acyl-coenzyme A synthetase ACSM3, mitochondrial (580 aa).

A mitochondrion-targeting transit peptide spans 1–21; sequence MAMLLRARCFHRLAIPDPRRI. Residues lysine 67 and lysine 100 each carry the N6-succinyllysine modification. Position 151 is an N6-acetyllysine (lysine 151). ATP-binding positions include 229-237, 368-373, aspartate 455, arginine 470, and lysine 566; these read TSGTTGPPK and EGYGQT.

This sequence belongs to the ATP-dependent AMP-binding enzyme family. Mg(2+) serves as cofactor. The cofactor is Mn(2+).

It localises to the mitochondrion. Its subcellular location is the mitochondrion matrix. It carries out the reaction a medium-chain fatty acid + ATP + CoA = a medium-chain fatty acyl-CoA + AMP + diphosphate. The catalysed reaction is propanoate + ATP + CoA = propanoyl-CoA + AMP + diphosphate. It catalyses the reaction butanoate + ATP + CoA = butanoyl-CoA + AMP + diphosphate. The enzyme catalyses 2-methylpropanoate + ATP + CoA = 2-methylpropanoyl-CoA + AMP + diphosphate. It carries out the reaction 2-methylbutanoate + ATP + CoA = 2-methylbutanoyl-CoA + AMP + diphosphate. The catalysed reaction is octanoate + ATP + CoA = octanoyl-CoA + AMP + diphosphate. Its function is as follows. Catalyzes the activation of fatty acids by CoA to produce an acyl-CoA, the first step in fatty acid metabolism. Capable of activating medium-chain fatty acids with a preference for isobutyrate among fatty acids with 2-6 carbon atoms. The chain is Acyl-coenzyme A synthetase ACSM3, mitochondrial (Acsm3) from Rattus norvegicus (Rat).